Reading from the N-terminus, the 519-residue chain is Transmembrane protein 180 (519 aa).

Topologically, residues 1 to 11 (MGLDWPQAWLL) are extracellular. Residues 12–43 (GLPIAVVYGSLALFTSILHNVFLLYYVDTFVS) traverse the membrane as a helical segment. The Cytoplasmic segment spans residues 44–55 (VYKINKVSFWVG). Residues 56-74 (ETVFLLWNSFNDPLFGWLS) traverse the membrane as a helical segment. The Extracellular portion of the chain corresponds to 75-100 (DRQLLSSQPRSGAGLSSRDVVLTRVR). A helical membrane pass occupies residues 101-118 (ALGWHGPLLALSFLAFWV). Topologically, residues 119 to 126 (PWAPAGLQ) are cytoplasmic. Residues 127 to 151 (FLLCLCLYDGFLTLVDLHHHALLAD) form a helical membrane-spanning segment. Residues 152 to 155 (LALS) lie on the Extracellular side of the membrane. The helical transmembrane segment at 156-179 (SHDRTHLNFYCSLFSAAGSLSVFA) threads the bilayer. Residues 180-191 (SYAFWNKEDFSS) lie on the Cytoplasmic side of the membrane. Residues 192-223 (FRAFCVVLAAGSGLGFLGTTQLLKRQIEATRR) form a helical membrane-spanning segment. The Extracellular segment spans residues 224-264 (DRGCPGLDLDGGVCEEEPPVGGEEAGNITLGQYLRQLARHQ). N-linked (GlcNAc...) asparagine glycosylation occurs at Asn250. Residues 265–292 (NFLWFVGMDLVQVFHCHFNSNFFPLFLE) traverse the membrane as a helical segment. The Cytoplasmic portion of the chain corresponds to 293–305 (HLLSDHISLSTGS). A helical transmembrane segment spans residues 306-325 (FLLGISYVAPHLNNLYFLPL). Over 326–330 (CRRWG) the chain is Extracellular. A helical membrane pass occupies residues 331 to 350 (VYAVVRGLFLLKLSLSLLML). At 351 to 358 (LAGPDHPG) the chain is on the cytoplasmic side. The chain crosses the membrane as a helical span at residues 359-393 (LLCFFIASNRVFTEGTCKLLTLVVTDLVDEDLVLN). At 394–402 (HRKQAASAL) the chain is on the extracellular side. The chain crosses the membrane as a helical span at residues 403–429 (LFGMVALVTKPGQTFAPLLGTWLLCFY). Residues 430–468 (TGHDLFQQSPMTPVGSVRPWPELPAPAPAPAQAPTLRQG) lie on the Cytoplasmic side of the membrane. The chain crosses the membrane as a helical span at residues 469-487 (CFYLLVFVPITCALLQLFT). Over 488 to 519 (WSQFTLHGRRLRTVKAQRQNLAQIHTLNIKMV) the chain is Extracellular.

The protein resides in the cell membrane. The protein is Transmembrane protein 180 of Mus musculus (Mouse).